A 116-amino-acid polypeptide reads, in one-letter code: Large ribosomal subunit protein uL22c (116 aa).

It belongs to the universal ribosomal protein uL22 family. As to quaternary structure, part of the 50S ribosomal subunit.

It is found in the plastid. The protein resides in the chloroplast. Functionally, this protein binds specifically to 23S rRNA. Its function is as follows. The globular domain of the protein is located near the polypeptide exit tunnel on the outside of the subunit, while an extended beta-hairpin is found that lines the wall of the exit tunnel in the center of the 70S ribosome. The protein is Large ribosomal subunit protein uL22c (rpl22) of Porphyra purpurea (Red seaweed).